A 117-amino-acid chain; its full sequence is Small ribosomal subunit protein bS6 (117 aa).

Residues 92–117 (KVDEHPEGPSIQMQKREERDNRRERR) are disordered. Positions 105–117 (QKREERDNRRERR) are enriched in basic and acidic residues.

This sequence belongs to the bacterial ribosomal protein bS6 family.

In terms of biological role, binds together with bS18 to 16S ribosomal RNA. The polypeptide is Small ribosomal subunit protein bS6 (Dinoroseobacter shibae (strain DSM 16493 / NCIMB 14021 / DFL 12)).